Reading from the N-terminus, the 253-residue chain is UPF0246 protein lhv_1883 (253 aa).

The protein belongs to the UPF0246 family.

The polypeptide is UPF0246 protein lhv_1883 (Lactobacillus helveticus (strain DPC 4571)).